A 303-amino-acid chain; its full sequence is MLIVQQFQKRSFIIPSLISSGLSYLSKDIRLADKMEDGELHFPKTEFEKSQNTSRPLFQRPEPNYPGHVPLYNFEKLLMFLGSSIGAFVNPTNNNFIVSLGESTAFPWVLNRLRTQMLNDPSGRQILKERPHMTSKSLNLDELKNYPDNSLGKSYFLWLEREGVSPDTRVPVKYITDPELAFVFQRYRECHDFYHTITGLPIVREGEIALKLFEFMNLGIPMTGLGALFAPIPIKSSQRRRLLSVYYPWAVKNGTICKPLINVYWEKIMKKDIDVLRSELGIEKPPDMRELRKKARSKKKQVA.

Histidine 191, aspartate 192, histidine 195, and glutamate 207 together coordinate Zn(2+).

Belongs to the COQ4 family. As to quaternary structure, component of a multi-subunit COQ enzyme complex, composed of at least COQ3, COQ4, COQ5, COQ6, COQ7 and COQ9. Requires Zn(2+) as cofactor.

The protein resides in the mitochondrion inner membrane. The enzyme catalyses a 4-hydroxy-3-methoxy-5-(all-trans-polyprenyl)benzoate + H(+) = a 2-methoxy-6-(all-trans-polyprenyl)phenol + CO2. It participates in cofactor biosynthesis; ubiquinone biosynthesis. In terms of biological role, lyase that catalyzes the C1-decarboxylation of 4-hydroxy-3-methoxy-5-(all-trans-polyprenyl)benzoic acid into 2-methoxy-6-(all-trans-polyprenyl)phenol during ubiquinone biosynthesis. This is Ubiquinone biosynthesis protein COQ4, mitochondrial from Komagataella phaffii (strain GS115 / ATCC 20864) (Yeast).